Reading from the N-terminus, the 213-residue chain is Thiamine-phosphate synthase (213 aa).

Residues 38 to 42 (QLREK) and N73 contribute to the 4-amino-2-methyl-5-(diphosphooxymethyl)pyrimidine site. Mg(2+) is bound by residues D74 and D93. Residue S111 coordinates 4-amino-2-methyl-5-(diphosphooxymethyl)pyrimidine. 137–139 (TTS) is a 2-[(2R,5Z)-2-carboxy-4-methylthiazol-5(2H)-ylidene]ethyl phosphate binding site. Position 140 (K140) interacts with 4-amino-2-methyl-5-(diphosphooxymethyl)pyrimidine. 2-[(2R,5Z)-2-carboxy-4-methylthiazol-5(2H)-ylidene]ethyl phosphate-binding positions include G169 and 189-190 (IS).

Belongs to the thiamine-phosphate synthase family. Mg(2+) serves as cofactor.

It carries out the reaction 2-[(2R,5Z)-2-carboxy-4-methylthiazol-5(2H)-ylidene]ethyl phosphate + 4-amino-2-methyl-5-(diphosphooxymethyl)pyrimidine + 2 H(+) = thiamine phosphate + CO2 + diphosphate. The enzyme catalyses 2-(2-carboxy-4-methylthiazol-5-yl)ethyl phosphate + 4-amino-2-methyl-5-(diphosphooxymethyl)pyrimidine + 2 H(+) = thiamine phosphate + CO2 + diphosphate. The catalysed reaction is 4-methyl-5-(2-phosphooxyethyl)-thiazole + 4-amino-2-methyl-5-(diphosphooxymethyl)pyrimidine + H(+) = thiamine phosphate + diphosphate. The protein operates within cofactor biosynthesis; thiamine diphosphate biosynthesis; thiamine phosphate from 4-amino-2-methyl-5-diphosphomethylpyrimidine and 4-methyl-5-(2-phosphoethyl)-thiazole: step 1/1. Its function is as follows. Condenses 4-methyl-5-(beta-hydroxyethyl)thiazole monophosphate (THZ-P) and 2-methyl-4-amino-5-hydroxymethyl pyrimidine pyrophosphate (HMP-PP) to form thiamine monophosphate (TMP). This is Thiamine-phosphate synthase from Lysinibacillus sphaericus (strain C3-41).